We begin with the raw amino-acid sequence, 87 residues long: MEWKLFADLAEVAGSRTVRVDVDGDATVGDALDALVGAHPALESRVFGDDGELYDHINVLRNGEAAALGEATAAGDELALFPPVSGG.

Gly-87 carries the post-translational modification 1-thioglycine; alternate. Gly-87 carries the glycyl adenylate; alternate modification. Residue Gly-87 forms a Glycyl lysine isopeptide (Gly-Lys) (interchain with K-? in acceptor proteins); alternate linkage.

In terms of processing, the C-terminal glycine is likely acyl-adenylated (-COAMP) by UbaA, and also probably thiocarboxylated (-COSH) to function in sulfur transfer.

Functionally, functions as a protein modifier covalently attached to lysine residues of substrate proteins, as well as a sulfur carrier in molybdenum cofactor (MoCo) biosynthesis. The protein modification process is termed sampylation and involves the formation of an isopeptide bond between the SAMP1 C-terminal glycine carboxylate and the epsilon-amino group of lysine residues on target proteins. May serve as a proteolytic signal in the cell to target proteins for degradation by proteasomes. This Haloferax volcanii (strain ATCC 29605 / DSM 3757 / JCM 8879 / NBRC 14742 / NCIMB 2012 / VKM B-1768 / DS2) (Halobacterium volcanii) protein is Small archaeal modifier protein 1 (samp1).